Reading from the N-terminus, the 488-residue chain is Phenylalanine--tRNA ligase alpha subunit (488 aa).

Residues Thr315, 354-356 (QLD), Phe394, and Phe419 contribute to the L-phenylalanine site.

Belongs to the class-II aminoacyl-tRNA synthetase family. Phe-tRNA synthetase alpha subunit type 2 subfamily. As to quaternary structure, tetramer of two alpha and two beta subunits. Requires Mg(2+) as cofactor.

Its subcellular location is the cytoplasm. It catalyses the reaction tRNA(Phe) + L-phenylalanine + ATP = L-phenylalanyl-tRNA(Phe) + AMP + diphosphate + H(+). In Pyrobaculum calidifontis (strain DSM 21063 / JCM 11548 / VA1), this protein is Phenylalanine--tRNA ligase alpha subunit.